We begin with the raw amino-acid sequence, 222 residues long: uncharacterized protein (222 aa).

The segment at residues 1-27 (MSFTRRKFVLGMGTVIFFTGSASSLLA) is a signal peptide (tat-type signal). 4Fe-4S ferredoxin-type domains lie at 37–66 (YAMI…PAQG), 83–114 (TQYH…RDEQ), and 115–144 (GIVR…LNPV). Cysteine 46, cysteine 49, cysteine 52, cysteine 56, cysteine 92, cysteine 95, cysteine 100, cysteine 104, cysteine 124, cysteine 127, cysteine 130, cysteine 134, cysteine 151, cysteine 154, cysteine 167, and cysteine 171 together coordinate [4Fe-4S] cluster.

Post-translationally, predicted to be exported by the Tat system. The position of the signal peptide cleavage has not been experimentally proven.

This is an uncharacterized protein from Escherichia coli O157:H7.